The sequence spans 79 residues: D-alanyl carrier protein (79 aa).

The region spanning 2–79 (AEFKEQVLDI…MVIKKLEEIR (78 aa)) is the Carrier domain. At S37 the chain carries O-(pantetheine 4'-phosphoryl)serine.

This sequence belongs to the DltC family. 4'-phosphopantetheine is transferred from CoA to a specific serine of apo-DCP.

It localises to the cytoplasm. The protein operates within cell wall biogenesis; lipoteichoic acid biosynthesis. In terms of biological role, carrier protein involved in the D-alanylation of lipoteichoic acid (LTA). The loading of thioester-linked D-alanine onto DltC is catalyzed by D-alanine--D-alanyl carrier protein ligase DltA. The DltC-carried D-alanyl group is further transferred to cell membrane phosphatidylglycerol (PG) by forming an ester bond, probably catalyzed by DltD. D-alanylation of LTA plays an important role in modulating the properties of the cell wall in Gram-positive bacteria, influencing the net charge of the cell wall. This chain is D-alanyl carrier protein, found in Bacillus mycoides (strain KBAB4) (Bacillus weihenstephanensis).